We begin with the raw amino-acid sequence, 742 residues long: Two-component response regulator-like PRR37 (742 aa).

Residues 63–181 form the Response regulatory domain; it reads KVLLVDSDDS…ELKNLWQHVW (119 aa). Residues 186–195 are compositionally biased toward low complexity; that stretch reads SSSGSGSESG. Disordered stretches follow at residues 186–249, 290–346, 377–402, 478–517, 533–568, 590–671, and 697–742; these read SSSG…SWTK, PCTS…PLQN, QQAA…NRDN, MKSN…NKER, FHPA…GEVQ, NGGS…GNDM, and NFGK…AADR. Polar residues predominate over residues 236–248; that stretch reads DNGSGTQAQSSWT. Residues 299–313 show a composition bias toward basic and acidic residues; it reads KQKETNDDFKGKDLE. A compositionally biased stretch (polar residues) spans 318 to 330; it reads RNLNTAYQSSPNE. The span at 331–341 shows a compositional bias: basic and acidic residues; sequence RSIKPTDRRNE. Residues 490–502 are compositionally biased toward low complexity; the sequence is GSNGSSNNNDMGS. A compositionally biased stretch (polar residues) spans 503-512; that stretch reads TTKNVVTKPS. Positions 618-634 are enriched in low complexity; that stretch reads NGSNSGSNNGSNGQNGS. Residues 656–667 are compositionally biased toward gly residues; sequence GPGGGNGSGSGS. A CCT domain is found at 682–724; that stretch reads RVAAVIKFRQKRKERNFGKKVRYQSRKRLAEQRPRVRGQFVRQ. The segment covering 697 to 708 has biased composition (basic residues); sequence NFGKKVRYQSRK. Residues 719–731 are compositionally biased toward low complexity; the sequence is GQFVRQAVQDQQQ.

It belongs to the ARR-like family.

It localises to the nucleus. Functionally, probable transcription factor involved in the regulation of flowering time under long day (LD) conditions. Functions as a repressor of flowering. Controls flowering time by negatively regulating the expression of HD3A. Acts downstream of the phytochrome B to repress the expression of EHD1, an activator of the flowering promoter genes HD3A and RFT1. Controls photoperiodic flowering response. Seems to be one of the component of the circadian clock. Expression of several members of the ARR-like family is controlled by circadian rhythm. The particular coordinated sequential expression of PRR73, PRR37, PRR95, PRR59 and PPR1 result to circadian waves that may be at the basis of the endogenous circadian clock. The sequence is that of Two-component response regulator-like PRR37 from Oryza sativa subsp. japonica (Rice).